Consider the following 266-residue polypeptide: Chymotrypsin-like elastase family member 1 (266 aa).

Positions 1 to 16 are cleaved as a signal peptide; the sequence is MLRLLVFTSLVLYGHS. The propeptide at 17–26 is activation peptide; sequence TQDFPETNAR. One can recognise a Peptidase S1 domain in the interval 27–264; sequence VVGGTAVSKN…YISWINNAIA (238 aa). Residues Cys-56 and Cys-72 are joined by a disulfide bond. The Charge relay system role is filled by His-71. Ca(2+) is bound by residues Asp-85, Asn-87, Gln-90, and Glu-95. N-linked (GlcNAc...) asparagine glycosylation is present at Asn-87. Asp-119 functions as the Charge relay system in the catalytic mechanism. 3 cysteine pairs are disulfide-bonded: Cys-153–Cys-220, Cys-184–Cys-200, and Cys-210–Cys-240. Catalysis depends on Ser-214, which acts as the Charge relay system. Asn-241 is a glycosylation site (N-linked (GlcNAc...) asparagine).

Belongs to the peptidase S1 family. Elastase subfamily. Ca(2+) is required as a cofactor. In terms of tissue distribution, pancreas.

Its subcellular location is the secreted. The catalysed reaction is Hydrolysis of proteins, including elastin. Preferential cleavage: Ala-|-Xaa.. Serine proteases that hydrolyze many proteins in addition to elastin. This chain is Chymotrypsin-like elastase family member 1 (CELA1), found in Bos taurus (Bovine).